The following is a 361-amino-acid chain: Probable dual-specificity RNA methyltransferase RlmN (361 aa).

Glu91 (proton acceptor) is an active-site residue. One can recognise a Radical SAM core domain in the interval 97 to 335 (QHYGLSVCVT…CVVRQEHGTD (239 aa)). Cys104 and Cys340 are disulfide-bonded. Positions 111, 115, and 118 each coordinate [4Fe-4S] cluster. S-adenosyl-L-methionine is bound by residues 163–164 (GE), Ser195, 218–220 (SLH), and Asn296. Cys340 functions as the S-methylcysteine intermediate in the catalytic mechanism.

The protein belongs to the radical SAM superfamily. RlmN family. It depends on [4Fe-4S] cluster as a cofactor.

Its subcellular location is the cytoplasm. It carries out the reaction adenosine(2503) in 23S rRNA + 2 reduced [2Fe-2S]-[ferredoxin] + 2 S-adenosyl-L-methionine = 2-methyladenosine(2503) in 23S rRNA + 5'-deoxyadenosine + L-methionine + 2 oxidized [2Fe-2S]-[ferredoxin] + S-adenosyl-L-homocysteine. It catalyses the reaction adenosine(37) in tRNA + 2 reduced [2Fe-2S]-[ferredoxin] + 2 S-adenosyl-L-methionine = 2-methyladenosine(37) in tRNA + 5'-deoxyadenosine + L-methionine + 2 oxidized [2Fe-2S]-[ferredoxin] + S-adenosyl-L-homocysteine. Its function is as follows. Specifically methylates position 2 of adenine 2503 in 23S rRNA and position 2 of adenine 37 in tRNAs. The chain is Probable dual-specificity RNA methyltransferase RlmN from Streptococcus mutans serotype c (strain ATCC 700610 / UA159).